The following is a 237-amino-acid chain: Neural retina-specific leucine zipper protein (237 aa).

Residues Lys-20 and Lys-24 each participate in a glycyl lysine isopeptide (Lys-Gly) (interchain with G-Cter in SUMO) cross-link. The tract at residues 26-64 (EPSEGRSGVPTASLGSTPYSSVPPSPTFSEPGMVGGGEA) is disordered. The tract at residues 30–93 (GRSGVPTASL…SDEVLGLSPD (64 aa)) is minimal transactivation domain (MTD). The basic motif stretch occupies residues 159 to 185 (RLKQRRRTLKNRGYAQACRSKRLQQRR). One can recognise a bZIP domain in the interval 159-222 (RLKQRRRTLK…DLYKARCDRL (64 aa)). The leucine-zipper stretch occupies residues 187–208 (LEAERARLAAQLDALRAEVARL).

It belongs to the bZIP family. Interacts with FIZ1; this interaction represses transactivation. Interacts (via the leucine-zipper domain) with CRX. Post-translationally, disumoylated at Lys-20. Sumoylation modulates the transcriptional activity of NRL on RHO and NR2E3 promoters, and is required for normal rod differentiation. Phosphorylated. Expressed in the retina (at protein level).

The protein resides in the cytoplasm. It localises to the nucleus. Acts as a transcriptional activator which regulates the expression of several rod-specific genes, including RHO and PDE6B. Also functions as a transcriptional coactivator, stimulating transcription mediated by the transcription factor CRX and NR2E3. Binds to the rhodopsin promoter in a sequence-specific manner. The chain is Neural retina-specific leucine zipper protein (Nrl) from Mus musculus (Mouse).